The primary structure comprises 85 residues: Toxin BmKAEP (85 aa).

A signal peptide spans 1–21 (MKLFLLLVISASMLIDGLVNA). An LCN-type CS-alpha/beta domain is found at 22–82 (DGYIRGSNGC…TWKSESNTCG (61 aa)). 4 disulfide bridges follow: C31-C81, C35-C56, C42-C63, and C46-C65. G82 is modified (glycine amide).

Expressed by the venom gland.

The protein resides in the secreted. Its function is as follows. Shows anti-epileptic activity. Shares high homology with depressant insect toxins, but shows very weak toxicity against mammals and insects and no obvious symptoms on insect larvae. May target voltage-gated sodium channel (Nav). The polypeptide is Toxin BmKAEP (Olivierus martensii (Manchurian scorpion)).